The sequence spans 185 residues: GTP cyclohydrolase 1 (185 aa).

The Zn(2+) site is built by Cys75, His78, and Cys146.

The protein belongs to the GTP cyclohydrolase I family. In terms of assembly, toroid-shaped homodecamer, composed of two pentamers of five dimers.

The catalysed reaction is GTP + H2O = 7,8-dihydroneopterin 3'-triphosphate + formate + H(+). It participates in cofactor biosynthesis; 7,8-dihydroneopterin triphosphate biosynthesis; 7,8-dihydroneopterin triphosphate from GTP: step 1/1. The sequence is that of GTP cyclohydrolase 1 from Methylococcus capsulatus (strain ATCC 33009 / NCIMB 11132 / Bath).